Reading from the N-terminus, the 227-residue chain is Orotidine 5'-phosphate decarboxylase (227 aa).

Substrate is bound by residues aspartate 8, lysine 30, 59–68 (DLKLYDIPYT), threonine 118, arginine 178, glutamine 187, glycine 207, and arginine 208. Lysine 61 functions as the Proton donor in the catalytic mechanism.

The protein belongs to the OMP decarboxylase family. Type 1 subfamily. Homodimer.

The enzyme catalyses orotidine 5'-phosphate + H(+) = UMP + CO2. Its pathway is pyrimidine metabolism; UMP biosynthesis via de novo pathway; UMP from orotate: step 2/2. Its function is as follows. Catalyzes the decarboxylation of orotidine 5'-monophosphate (OMP) to uridine 5'-monophosphate (UMP). The polypeptide is Orotidine 5'-phosphate decarboxylase (Helicobacter pylori (strain P12)).